The following is a 403-amino-acid chain: Metacaspase-1A (403 aa).

Positions 1–93 (MQHHHHSSYG…PPTDPVAFGH (93 aa)) are disordered. Residues 18–31 (GQAYRQQQPYYGQP) are compositionally biased toward low complexity. Residues 32-55 (SPQPYAQPPPPNYQRPSGYGPPPS) are compositionally biased toward pro residues. Active-site residues include His-194 and Cys-250.

It belongs to the peptidase C14B family.

Its function is as follows. Involved in cell death (apoptosis). The protein is Metacaspase-1A (casA) of Aspergillus terreus (strain NIH 2624 / FGSC A1156).